Consider the following 173-residue polypeptide: Ribosome maturation factor RimM (173 aa).

Positions 98-170 constitute a PRC barrel domain; the sequence is EDEYYWCDLI…RMLITPLEGL (73 aa).

This sequence belongs to the RimM family. In terms of assembly, binds ribosomal protein uS19.

The protein localises to the cytoplasm. Its function is as follows. An accessory protein needed during the final step in the assembly of 30S ribosomal subunit, possibly for assembly of the head region. Essential for efficient processing of 16S rRNA. May be needed both before and after RbfA during the maturation of 16S rRNA. It has affinity for free ribosomal 30S subunits but not for 70S ribosomes. The protein is Ribosome maturation factor RimM of Pelobacter propionicus (strain DSM 2379 / NBRC 103807 / OttBd1).